Here is a 50-residue protein sequence, read N- to C-terminus: Conotoxin Bu13 (50 aa).

Residue Ala1 is a signal peptide. A propeptide spanning residues 2–24 (EDSRGTQLHRALRKTTKLSLSIR) is cleaved from the precursor. Intrachain disulfides connect Cys25–Cys40, Cys32–Cys44, and Cys39–Cys49.

It belongs to the conotoxin O1 superfamily. In terms of tissue distribution, expressed by the venom duct.

It is found in the secreted. This chain is Conotoxin Bu13, found in Conus bullatus (Bubble cone).